The chain runs to 146 residues: Large-conductance mechanosensitive channel (146 aa).

The next 3 membrane-spanning stretches (helical) occupy residues isoleucine 17 to valine 37, isoleucine 40 to valine 60, and leucine 89 to isoleucine 109.

This sequence belongs to the MscL family. As to quaternary structure, homopentamer.

It is found in the cell inner membrane. Functionally, channel that opens in response to stretch forces in the membrane lipid bilayer. May participate in the regulation of osmotic pressure changes within the cell. The polypeptide is Large-conductance mechanosensitive channel (Acinetobacter baylyi (strain ATCC 33305 / BD413 / ADP1)).